Consider the following 88-residue polypeptide: Cell division topological specificity factor (88 aa).

It belongs to the MinE family.

Functionally, prevents the cell division inhibition by proteins MinC and MinD at internal division sites while permitting inhibition at polar sites. This ensures cell division at the proper site by restricting the formation of a division septum at the midpoint of the long axis of the cell. The polypeptide is Cell division topological specificity factor (Clostridium kluyveri (strain ATCC 8527 / DSM 555 / NBRC 12016 / NCIMB 10680 / K1)).